The chain runs to 160 residues: Transcription elongation factor GreA (160 aa).

Positions 49–75 (SEYDEAKNDQAFTEGKILQLENKLKNA) form a coiled coil.

The protein belongs to the GreA/GreB family.

In terms of biological role, necessary for efficient RNA polymerase transcription elongation past template-encoded arresting sites. The arresting sites in DNA have the property of trapping a certain fraction of elongating RNA polymerases that pass through, resulting in locked ternary complexes. Cleavage of the nascent transcript by cleavage factors such as GreA or GreB allows the resumption of elongation from the new 3'terminus. GreA releases sequences of 2 to 3 nucleotides. The chain is Transcription elongation factor GreA from Clostridium botulinum (strain Alaska E43 / Type E3).